The primary structure comprises 244 residues: Orotidine 5'-phosphate decarboxylase (244 aa).

Substrate-binding positions include Asp20, Lys42, 70–79, Thr125, Arg186, Gln195, Gly215, and Arg216; that span reads DLKFFDIPAT. Lys72 serves as the catalytic Proton donor.

Belongs to the OMP decarboxylase family. Type 1 subfamily. As to quaternary structure, homodimer.

The enzyme catalyses orotidine 5'-phosphate + H(+) = UMP + CO2. The protein operates within pyrimidine metabolism; UMP biosynthesis via de novo pathway; UMP from orotate: step 2/2. In terms of biological role, catalyzes the decarboxylation of orotidine 5'-monophosphate (OMP) to uridine 5'-monophosphate (UMP). This chain is Orotidine 5'-phosphate decarboxylase, found in Xylella fastidiosa (strain M12).